Here is a 336-residue protein sequence, read N- to C-terminus: MGNCLHTAELSPSTENSSQLDFEDAWNSSYDVNYSFPDVDYDANLEAAAPCHSCNLLDDSALPFFILTSVLGILASSTVLFILFRPLFRWQLCPGWPVLAQLAVGSALFSIVVPILAPGLGSTHSSALCSLGYCVWYGSAFAQALLLGCHASLGHRLGAGQVPGLTLGLTVGIWGVAALLTLPVTLASGASGGLCTPIHSTELKALQATHTVACLAIFVLLPLGLFGAKGLKKALGMGPGPWMNILWAWFIFWWPHGVVLGLDFLVRSKLLLLSTCLAQQALDLLLNLAEALAILHCVATPLILALFYHQATRTLLPSLPLPEGWSSHLDTLGSKS.

Residues 1–63 (MGNCLHTAEL…CNLLDDSALP (63 aa)) are Extracellular-facing. N16, N27, and N33 each carry an N-linked (GlcNAc...) asparagine glycan. 2 disulfide bridges follow: C51/C276 and C129/C195. Residues 64 to 84 (FFILTSVLGILASSTVLFILF) traverse the membrane as a helical segment. Topologically, residues 85–95 (RPLFRWQLCPG) are cytoplasmic. A helical transmembrane segment spans residues 96–116 (WPVLAQLAVGSALFSIVVPIL). Residues 117–129 (APGLGSTHSSALC) lie on the Extracellular side of the membrane. Residues 130–153 (SLGYCVWYGSAFAQALLLGCHASL) form a helical membrane-spanning segment. Residues 154 to 166 (GHRLGAGQVPGLT) are Cytoplasmic-facing. A helical transmembrane segment spans residues 167 to 187 (LGLTVGIWGVAALLTLPVTLA). Residues 188–207 (SGASGGLCTPIHSTELKALQ) lie on the Extracellular side of the membrane. Residues 208-228 (ATHTVACLAIFVLLPLGLFGA) form a helical membrane-spanning segment. Topologically, residues 229–244 (KGLKKALGMGPGPWMN) are cytoplasmic. A helical transmembrane segment spans residues 245-265 (ILWAWFIFWWPHGVVLGLDFL). Residues 266–287 (VRSKLLLLSTCLAQQALDLLLN) are Extracellular-facing. A helical transmembrane segment spans residues 288-308 (LAEALAILHCVATPLILALFY). The Cytoplasmic segment spans residues 309–336 (HQATRTLLPSLPLPEGWSSHLDTLGSKS).

The protein belongs to the G-protein coupled receptor 1 family. Atypical chemokine receptor subfamily.

It localises to the early endosome. The protein resides in the recycling endosome. Its subcellular location is the membrane. Functionally, atypical chemokine receptor that controls chemokine levels and localization via high-affinity chemokine binding that is uncoupled from classic ligand-driven signal transduction cascades, resulting instead in chemokine sequestration, degradation, or transcytosis. Also known as interceptor (internalizing receptor) or chemokine-scavenging receptor or chemokine decoy receptor. Has a promiscuous chemokine-binding profile, interacting with inflammatory chemokines of both the CXC and the CC subfamilies but not with homeostatic chemokines. Acts as a receptor for chemokines including CCL2, CCL5, CCL7, CCL11, CCL13, CCL14, CCL17, CXCL5, CXCL6, IL8/CXCL8, CXCL11, GRO, RANTES, MCP-1 and TARC. May regulate chemokine bioavailability and, consequently, leukocyte recruitment through two distinct mechanisms: when expressed in endothelial cells, it sustains the abluminal to luminal transcytosis of tissue-derived chemokines and their subsequent presentation to circulating leukocytes; when expressed in erythrocytes, serves as blood reservoir of cognate chemokines but also as a chemokine sink, buffering potential surges in plasma chemokine levels. The sequence is that of Atypical chemokine receptor 1 (ACKR1) from Gorilla gorilla gorilla (Western lowland gorilla).